A 778-amino-acid polypeptide reads, in one-letter code: Aconitate hydratase, mitochondrial (778 aa).

The transit peptide at 1–16 directs the protein to the mitochondrion; that stretch reads MLSARSAIKRPIVRGL. Residues glutamine 95 and 188-190 contribute to the substrate site; that span reads DSH. A [4Fe-4S] cluster-binding site is contributed by cysteine 382. Serine 391 bears the Phosphoserine mark. Threonine 409 bears the Phosphothreonine mark. [4Fe-4S] cluster-binding residues include cysteine 445 and cysteine 448. Residues arginine 471 and arginine 476 each coordinate substrate. Residue serine 556 is modified to Phosphoserine. Residues arginine 604 and 667–668 contribute to the substrate site; that span reads SR.

This sequence belongs to the aconitase/IPM isomerase family. As to quaternary structure, monomer. Binds to mitochondrial DNA (mtDNA) and identified as component of mitochondrial nucleoids. The cofactor is [4Fe-4S] cluster.

Its subcellular location is the mitochondrion. It localises to the cytoplasm. The enzyme catalyses citrate = D-threo-isocitrate. Its pathway is carbohydrate metabolism; tricarboxylic acid cycle; isocitrate from oxaloacetate: step 2/2. Its activity is regulated as follows. Subject to catabolite regulation. Functionally, catalyzes the isomerization of citrate to isocitrate via cis-aconitate, a step in the citric acid cycle. Can also provide minor contributions to the reversible dehydration of (R)-homocitrate to cis-homoaconitate, a step in the alpha-aminoadipate pathway for lysine biosynthesis. Also plays an essential role in mtDNA maintenance. May directly protect mtDNA from accumulation of point mutations and ssDNA breaks as a component of mitochondrial nucleoids, or by preventing accumulation of iron citrate thereby alleviating its detrimental effects in mitochondria. In Saccharomyces cerevisiae (strain ATCC 204508 / S288c) (Baker's yeast), this protein is Aconitate hydratase, mitochondrial.